The sequence spans 239 residues: Adapter protein MecA (239 aa).

Residues 118-128 are compositionally biased toward basic and acidic residues; sequence EQRTKEKEAQG. The disordered stretch occupies residues 118–137; the sequence is EQRTKEKEAQGSKRQKSSAR.

Belongs to the MecA family. Homodimer.

In terms of biological role, enables the recognition and targeting of unfolded and aggregated proteins to the ClpC protease or to other proteins involved in proteolysis. This is Adapter protein MecA from Staphylococcus aureus (strain USA300).